A 220-amino-acid polypeptide reads, in one-letter code: Chaperone protein TorD (220 aa).

Belongs to the TorD/DmsD family. TorD subfamily.

The protein resides in the cytoplasm. In terms of biological role, involved in the biogenesis of TorA. Acts on TorA before the insertion of the molybdenum cofactor and, as a result, probably favors a conformation of the apoenzyme that is competent for acquiring the cofactor. The polypeptide is Chaperone protein TorD (Vibrio cholerae serotype O1 (strain ATCC 39315 / El Tor Inaba N16961)).